The chain runs to 219 residues: MALPWLQRVELLLFTAAFLCGALAAATLTRTQGSFGGNCPLYGVAALNGSSLALLGPSAPSLCYFVAGASGILALYCLLLLFFWVYSSCIEDSHRGSIGLRIALAISATAIFLILVSACILRFGTNSFCNSIISLNLTISCSEAQKTSWTPSGTAVQFYSNLHTAETSSWVNLILWCLALLLQAMQCKFKATSYQPQERGDQEWSSETDALVGHHQSHS.

4 helical membrane passes run 9–29 (VELL…ATLT), 65–85 (FVAG…FFWV), 98–118 (IGLR…LVSA), and 162–182 (LHTA…ALLL). S206 is subject to Phosphoserine.

This sequence belongs to the TMEM179 family.

The protein localises to the membrane. This chain is Transmembrane protein 179B (Tmem179b), found in Mus musculus (Mouse).